A 367-amino-acid polypeptide reads, in one-letter code: Homoserine O-acetyltransferase (367 aa).

In terms of domain architecture, AB hydrolase-1 spans 44–350 (NAIMVTHAWT…AYGHDAFLLE (307 aa)). The active-site Nucleophile is the serine 150. Arginine 217 serves as a coordination point for substrate. Active-site residues include aspartate 311 and histidine 344. Aspartate 345 serves as a coordination point for substrate.

The protein belongs to the AB hydrolase superfamily. MetX family. As to quaternary structure, homodimer.

The protein resides in the cytoplasm. It carries out the reaction L-homoserine + acetyl-CoA = O-acetyl-L-homoserine + CoA. It participates in amino-acid biosynthesis; L-methionine biosynthesis via de novo pathway; O-acetyl-L-homoserine from L-homoserine: step 1/1. In terms of biological role, transfers an acetyl group from acetyl-CoA to L-homoserine, forming acetyl-L-homoserine. The sequence is that of Homoserine O-acetyltransferase from Geotalea daltonii (strain DSM 22248 / JCM 15807 / FRC-32) (Geobacter daltonii).